We begin with the raw amino-acid sequence, 89 residues long: Neuropeptide S (89 aa).

A signal peptide spans 1-23 (MISSVKLNLILVLSLSTMHVFWC). Positions 24–67 (YPVPSSKVSGKSDYFLILLNSCPTRLDRSKELAFLKPILEKMFV) are excised as a propeptide.

Its subcellular location is the secreted. Its function is as follows. Modulates arousal and anxiety. May play an important anorexigenic role. Binds to its receptor NPSR1 with nanomolar affinity to increase intracellular calcium concentrations. This is Neuropeptide S (NPS) from Homo sapiens (Human).